The sequence spans 198 residues: MDFYPIAIEKLIEEFAKLPGIGYKTAQRLTLYVLNLPKEEVKEFSEALVKARGTIKYCSVCGNFTDKDPCAICSNPNRNKSIICVIEQPKDIMSMEKIREYNGVYHVLHGNISPMAGRGPEDIKLKELIRRIDGSVNEVIVATNPNVEGEATAMYISKILKPLGVKVTRIAHGVPVGGDLEYADEVTLAKALEGRIEL.

The C4-type zinc finger occupies cysteine 58 to cysteine 73. One can recognise a Toprim domain in the interval serine 81–proline 175.

This sequence belongs to the RecR family.

May play a role in DNA repair. It seems to be involved in an RecBC-independent recombinational process of DNA repair. It may act with RecF and RecO. This Clostridium botulinum (strain ATCC 19397 / Type A) protein is Recombination protein RecR.